A 625-amino-acid chain; its full sequence is Cysteine-rich receptor-like protein kinase 46 (625 aa).

The first 23 residues, 1–23 (MASTLISSLAVVLPLTLLAPSMS), serve as a signal peptide directing secretion. Residues 24 to 252 (MKISRIDVLG…LLAMSFTKEN (229 aa)) are Extracellular-facing. Gnk2-homologous domains lie at 29-130 (IDVL…NYSF) and 135-237 (VSHQ…NYTF). Residues Asn38, Asn127, Asn234, and Asn252 are each glycosylated (N-linked (GlcNAc...) asparagine). Residues 253–273 (LTYIFVISMVGVLAIAAGFWC) traverse the membrane as a helical segment. Residues 274–625 (GKCFYMRTSP…TKPPFLHDSM (352 aa)) lie on the Cytoplasmic side of the membrane. The region spanning 331–621 (FNESCKLGVG…LPTPTKPPFL (291 aa)) is the Protein kinase domain. Residues 337–345 (LGVGGYGEV) and Lys359 each bind ATP. Tyr404 carries the post-translational modification Phosphotyrosine. Residue Asp454 is the Proton acceptor of the active site. Ser458 is subject to Phosphoserine. Thr499 carries the phosphothreonine modification. Tyr507 carries the phosphotyrosine modification.

This sequence belongs to the protein kinase superfamily. Ser/Thr protein kinase family. CRK subfamily.

The protein localises to the membrane. The enzyme catalyses L-seryl-[protein] + ATP = O-phospho-L-seryl-[protein] + ADP + H(+). The catalysed reaction is L-threonyl-[protein] + ATP = O-phospho-L-threonyl-[protein] + ADP + H(+). This is Cysteine-rich receptor-like protein kinase 46 from Arabidopsis thaliana (Mouse-ear cress).